Reading from the N-terminus, the 257-residue chain is Hydroxyacylglutathione hydrolase (257 aa).

Zn(2+) contacts are provided by H54, H56, D58, H59, H113, D137, and H175.

It belongs to the metallo-beta-lactamase superfamily. Glyoxalase II family. In terms of assembly, monomer. Zn(2+) is required as a cofactor.

It carries out the reaction an S-(2-hydroxyacyl)glutathione + H2O = a 2-hydroxy carboxylate + glutathione + H(+). The protein operates within secondary metabolite metabolism; methylglyoxal degradation; (R)-lactate from methylglyoxal: step 2/2. Thiolesterase that catalyzes the hydrolysis of S-D-lactoyl-glutathione to form glutathione and D-lactic acid. The protein is Hydroxyacylglutathione hydrolase of Trichodesmium erythraeum (strain IMS101).